Reading from the N-terminus, the 40-residue chain is U12-ctenitoxin-Co1a (40 aa).

Cystine bridges form between cysteine 2-cysteine 16, cysteine 9-cysteine 22, cysteine 15-cysteine 31, and cysteine 24-cysteine 29.

Expressed by the venom gland.

The protein resides in the secreted. Functionally, insecticidal neurotoxin that reversibly inhibits the N-methyl-D-aspartate (NMDA)-subtype of ionotropic glutamate receptor (GRIN) and inhibits inactivation of insect sodium channels (Nav). In vivo, is highly toxic to insects. In Ctenus ornatus (Brazilian spider), this protein is U12-ctenitoxin-Co1a.